The following is a 328-amino-acid chain: 3-dehydroquinate synthase (328 aa).

Belongs to the archaeal-type DHQ synthase family.

It catalyses the reaction 2-amino-2,3,7-trideoxy-D-lyxo-hept-6-ulosonate + NAD(+) + H2O = 3-dehydroquinate + NH4(+) + NADH + H(+). In terms of biological role, catalyzes the oxidative deamination and cyclization of 2-amino-3,7-dideoxy-D-threo-hept-6-ulosonic acid (ADH) to yield 3-dehydroquinate (DHQ), which is fed into the canonical shikimic pathway of aromatic amino acid biosynthesis. The protein is 3-dehydroquinate synthase of Methanosphaerula palustris (strain ATCC BAA-1556 / DSM 19958 / E1-9c).